The following is a 271-amino-acid chain: Eukaryotic translation initiation factor 3 subunit G (271 aa).

Disordered stretches follow at residues 1–26 (MSTT…TNPD), 63–119 (AQRK…AQKL), and 147–187 (TTSS…RDDS). At Ser-77 the chain carries Phosphoserine. Residues 188-267 (TTLKVSQLNS…LILHLEWSKK (80 aa)) enclose the RRM domain.

It belongs to the eIF-3 subunit G family. In terms of assembly, component of the eukaryotic translation initiation factor 3 (eIF-3) complex.

The protein localises to the cytoplasm. Its function is as follows. RNA-binding component of the eukaryotic translation initiation factor 3 (eIF-3) complex, which is involved in protein synthesis of a specialized repertoire of mRNAs and, together with other initiation factors, stimulates binding of mRNA and methionyl-tRNAi to the 40S ribosome. The eIF-3 complex specifically targets and initiates translation of a subset of mRNAs involved in cell proliferation. This subunit can bind 18S rRNA. The chain is Eukaryotic translation initiation factor 3 subunit G from Scheffersomyces stipitis (strain ATCC 58785 / CBS 6054 / NBRC 10063 / NRRL Y-11545) (Yeast).